A 120-amino-acid polypeptide reads, in one-letter code: Spermidine export protein MdtJ (120 aa).

The next 4 membrane-spanning stretches (helical) occupy residues 1–21, 31–51, 54–74, and 81–101; these read MFYW…TLSM, AGFI…SFAV, IALG…ITIF, and EALS…IVLI.

Belongs to the drug/metabolite transporter (DMT) superfamily. Small multidrug resistance (SMR) (TC 2.A.7.1) family. MdtJ subfamily. As to quaternary structure, forms a complex with MdtI.

The protein localises to the cell inner membrane. Its function is as follows. Catalyzes the excretion of spermidine. The sequence is that of Spermidine export protein MdtJ from Salmonella choleraesuis (strain SC-B67).